The following is a 388-amino-acid chain: 1-deoxy-D-xylulose 5-phosphate reductoisomerase (388 aa).

Residues threonine 15, glycine 16, serine 17, isoleucine 18, and asparagine 127 each contribute to the NADPH site. Lysine 128 provides a ligand contact to 1-deoxy-D-xylulose 5-phosphate. Position 129 (glutamate 129) interacts with NADPH. Residue aspartate 153 participates in Mn(2+) binding. 1-deoxy-D-xylulose 5-phosphate contacts are provided by serine 154, glutamate 155, serine 179, and histidine 202. Residue glutamate 155 participates in Mn(2+) binding. Glycine 208 is an NADPH binding site. Positions 215, 220, 221, and 224 each coordinate 1-deoxy-D-xylulose 5-phosphate. Glutamate 224 provides a ligand contact to Mn(2+).

This sequence belongs to the DXR family. The cofactor is Mg(2+). Mn(2+) is required as a cofactor.

The enzyme catalyses 2-C-methyl-D-erythritol 4-phosphate + NADP(+) = 1-deoxy-D-xylulose 5-phosphate + NADPH + H(+). Its pathway is isoprenoid biosynthesis; isopentenyl diphosphate biosynthesis via DXP pathway; isopentenyl diphosphate from 1-deoxy-D-xylulose 5-phosphate: step 1/6. Functionally, catalyzes the NADPH-dependent rearrangement and reduction of 1-deoxy-D-xylulose-5-phosphate (DXP) to 2-C-methyl-D-erythritol 4-phosphate (MEP). The protein is 1-deoxy-D-xylulose 5-phosphate reductoisomerase of Bacteroides fragilis (strain ATCC 25285 / DSM 2151 / CCUG 4856 / JCM 11019 / LMG 10263 / NCTC 9343 / Onslow / VPI 2553 / EN-2).